Here is a 507-residue protein sequence, read N- to C-terminus: Sulfatase (507 aa).

A signal peptide spans 1-18 (MKTRYFLLLGICMLSCRT). Residues aspartate 39, aspartate 40, and cysteine 79 each coordinate Ca(2+). Cysteine 79 serves as the catalytic Nucleophile. Residue cysteine 79 is modified to 3-oxoalanine (Cys). Residue histidine 139 is part of the active site. Positions 325 and 326 each coordinate Ca(2+).

This sequence belongs to the sulfatase family. The cofactor is Ca(2+). Post-translationally, the conversion to 3-oxoalanine (also known as C-formylglycine, FGly), of a serine or cysteine residue in prokaryotes and of a cysteine residue in eukaryotes, is critical for catalytic activity. This post-translational modification is severely defective in multiple sulfatase deficiency (MSD).

It is found in the periplasm. Its function is as follows. Sulfatase that may be involved in ulvan degradation. Ulvan is the main polysaccharide component of the Ulvales (green seaweed) cell wall. It is composed of disaccharide building blocks comprising 3-sulfated rhamnose (Rha3S) linked to D-glucuronic acid (GlcA), L-iduronic acid (IduA), or D-xylose (Xyl). Has no activity on different ulvan polymers. The chain is Sulfatase from Formosa agariphila (strain DSM 15362 / KCTC 12365 / LMG 23005 / KMM 3901 / M-2Alg 35-1).